The primary structure comprises 422 residues: Glutamate-1-semialdehyde 2,1-aminomutase (422 aa).

Position 258 is an N6-(pyridoxal phosphate)lysine (K258).

It belongs to the class-III pyridoxal-phosphate-dependent aminotransferase family. HemL subfamily. Homodimer. Pyridoxal 5'-phosphate is required as a cofactor.

The protein resides in the cytoplasm. It carries out the reaction (S)-4-amino-5-oxopentanoate = 5-aminolevulinate. Its pathway is porphyrin-containing compound metabolism; protoporphyrin-IX biosynthesis; 5-aminolevulinate from L-glutamyl-tRNA(Glu): step 2/2. In Chlamydia muridarum (strain MoPn / Nigg), this protein is Glutamate-1-semialdehyde 2,1-aminomutase.